Consider the following 715-residue polypeptide: Interferon-induced GTP-binding protein Mx2 (715 aa).

Residues 1 to 14 (MSKAHKSWPHRRRN) show a composition bias toward basic residues. 2 disordered regions span residues 1-24 (MSKA…SLKK) and 69-88 (NNQP…PENN). The span at 69-80 (NNQPLPGNTSQP) shows a compositional bias: polar residues. The Dynamin-type G domain occupies 115-387 (DLALPAIAVI…LITHIQKSLP (273 aa)). A G1 motif region spans residues 125–132 (GDQSSGKS). 125–132 (GDQSSGKS) is a binding site for GTP. The G2 motif stretch occupies residues 150 to 152 (VTR). The tract at residues 225–228 (DLPG) is G3 motif. GTP is bound by residues 225–229 (DLPGI) and 294–297 (TKPD). The interval 294–297 (TKPD) is G4 motif. Positions 326 to 329 (KCRG) are G5 motif. A GED domain is found at 623-714 (FNEIGVHLNA…ALCQFSSKEI (92 aa)).

The protein belongs to the TRAFAC class dynamin-like GTPase superfamily. Dynamin/Fzo/YdjA family.

It localises to the cytoplasm. The protein localises to the nucleus. Functionally, interferon-induced dynamin-like GTPase with antiviral activity. This Macaca mulatta (Rhesus macaque) protein is Interferon-induced GTP-binding protein Mx2 (MX2).